We begin with the raw amino-acid sequence, 189 residues long: Putative manganese efflux pump MntP (189 aa).

A run of 6 helical transmembrane segments spans residues 3–23 (LSAT…ASIG), 41–61 (LIFG…GLFA), 65–85 (ILEW…CRMI), 104–124 (FWVL…IGVG), 132–152 (IVHT…LGML), and 165–185 (AEII…YEHI).

The protein belongs to the MntP (TC 9.B.29) family.

The protein resides in the cell inner membrane. Its function is as follows. Probably functions as a manganese efflux pump. The protein is Putative manganese efflux pump MntP of Yersinia enterocolitica serotype O:8 / biotype 1B (strain NCTC 13174 / 8081).